A 212-amino-acid polypeptide reads, in one-letter code: F-box protein GID2 (212 aa).

The segment at 1-74 is disordered; the sequence is MKFRSDSSGG…AGEGEQPRVP (74 aa). Over residues 35 to 59 the composition is skewed to low complexity; that stretch reads DPSSSSSQGEASSSSQPPPQQQQEE. Residues 70–116 enclose the F-box domain; the sequence is QPRVPDLGEDLVFEVLRRAEARTLAAAACVSRGWRQLAEDERLWEAA.

Part of some SCF(GID2) complex, which consist of a SKP1 protein, CUL1, GID2 and some RING box protein. Interacts directly with SKP2 and SKP15. Interacts directly with DELLA protein SLR1. May have a higher affinity for phosphorylated SLR1 proteins. As to expression, widely expressed. Preferentially expressed in unopened flowers, shoot apices and elongation stem. Expressed at lower level in the leaf blades, leaf sheaths, roots and rachis.

It localises to the nucleus. It functions in the pathway protein modification; protein ubiquitination. Its function is as follows. Essential component of some SCF-type E3 ligase complex that positively regulates the gibberellin signaling pathway. Upon gibberellin treatment, the complex mediates the ubiquitination and subsequent degradation of DELLA protein SLR1, a repressor of the gibberellin pathway, leading to activate the pathway. This Oryza sativa subsp. japonica (Rice) protein is F-box protein GID2 (GID2).